The primary structure comprises 400 residues: Nicotinate phosphoribosyltransferase (400 aa).

H220 is subject to Phosphohistidine; by autocatalysis.

This sequence belongs to the NAPRTase family. In terms of processing, transiently phosphorylated on a His residue during the reaction cycle. Phosphorylation strongly increases the affinity for substrates and increases the rate of nicotinate D-ribonucleotide production. Dephosphorylation regenerates the low-affinity form of the enzyme, leading to product release.

It catalyses the reaction nicotinate + 5-phospho-alpha-D-ribose 1-diphosphate + ATP + H2O = nicotinate beta-D-ribonucleotide + ADP + phosphate + diphosphate. It participates in cofactor biosynthesis; NAD(+) biosynthesis; nicotinate D-ribonucleotide from nicotinate: step 1/1. Its function is as follows. Catalyzes the synthesis of beta-nicotinate D-ribonucleotide from nicotinate and 5-phospho-D-ribose 1-phosphate at the expense of ATP. The polypeptide is Nicotinate phosphoribosyltransferase (Salmonella newport (strain SL254)).